Here is a 417-residue protein sequence, read N- to C-terminus: Serine hydroxymethyltransferase (417 aa).

Residues L121 and 125-127 (GHL) each bind (6S)-5,6,7,8-tetrahydrofolate. At K229 the chain carries N6-(pyridoxal phosphate)lysine. 355–357 (SPF) lines the (6S)-5,6,7,8-tetrahydrofolate pocket.

The protein belongs to the SHMT family. As to quaternary structure, homodimer. Pyridoxal 5'-phosphate serves as cofactor.

It is found in the cytoplasm. The catalysed reaction is (6R)-5,10-methylene-5,6,7,8-tetrahydrofolate + glycine + H2O = (6S)-5,6,7,8-tetrahydrofolate + L-serine. Its pathway is one-carbon metabolism; tetrahydrofolate interconversion. The protein operates within amino-acid biosynthesis; glycine biosynthesis; glycine from L-serine: step 1/1. Catalyzes the reversible interconversion of serine and glycine with tetrahydrofolate (THF) serving as the one-carbon carrier. This reaction serves as the major source of one-carbon groups required for the biosynthesis of purines, thymidylate, methionine, and other important biomolecules. Also exhibits THF-independent aldolase activity toward beta-hydroxyamino acids, producing glycine and aldehydes, via a retro-aldol mechanism. The chain is Serine hydroxymethyltransferase from Tolumonas auensis (strain DSM 9187 / NBRC 110442 / TA 4).